Consider the following 933-residue polypeptide: Progesterone receptor (933 aa).

The AF3; mediates transcriptional activation stretch occupies residues 1 to 164 (MTELKAKGPR…PATQRVLSPL (164 aa)). The tract at residues 1 to 256 (MTELKAKGPR…AAAGGGAAAV (256 aa)) is disordered. The modulating, Pro-Rich stretch occupies residues 1-566 (MTELKAKGPR…YSFESLPQKI (566 aa)). Phosphoserine is present on serine 20. 2 consecutive short sequence motifs (LXXL motif) follow at residues 55–59 (LDGLL) and 115–119 (LDTLL). A phosphoserine mark is found at serine 130 and serine 162. The segment at 165 to 305 (MSRSGGKAGD…LATTTMDFIH (141 aa)) is mediates transcriptional transrepression. The Nuclear localization signal motif lies at 183 to 187 (KVLPR). Phosphoserine is present on residues serine 190 and serine 213. The segment covering 220-231 (EVEEEDGSESED) has biased composition (acidic residues). Residue serine 294 is modified to Phosphoserine; by MAPK1. A disordered region spans residues 332 to 380 (GAGAASAFAPPRSSPSASSTPVAVGDFPDCAYPPDADPKDDAYPLYGDF). Over residues 335–350 (AASAFAPPRSSPSASS) the composition is skewed to low complexity. Serine 345 carries the phosphoserine; by MAPK modification. Residue lysine 388 forms a Glycyl lysine isopeptide (Lys-Gly) (interchain with G-Cter in SUMO); alternate linkage. Residue lysine 388 forms a Glycyl lysine isopeptide (Lys-Gly) (interchain with G-Cter in ubiquitin); alternate linkage. Serine 400 carries the post-translational modification Phosphoserine; by CDK2. Residues 415 to 454 (PDFPLGPPPPLPPRAPPSRPGEAAVTAAPASASVSSSSSS) are disordered. The span at 418-433 (PLGPPPPLPPRAPPSR) shows a compositional bias: pro residues. Residues 434-454 (PGEAAVTAAPASASVSSSSSS) are compositionally biased toward low complexity. Residues 456–546 (STLECILYKA…VYPPYLNYLR (91 aa)) form an AF1; mediates transcriptional activation region. Residue lysine 531 forms a Glycyl lysine isopeptide (Lys-Gly) (interchain with G-Cter in SUMO) linkage. NR C4-type zinc fingers lie at residues 567-587 (CLIC…CGSC) and 603-627 (CAGR…LRKC). Positions 567–639 (CLICGDEASG…AGMVLGGRKF (73 aa)) form a DNA-binding region, nuclear receptor. A Phosphoserine modification is found at serine 676. The 235-residue stretch at 679-913 (QDIQFFPPLI…EFPEMMSEVI (235 aa)) folds into the NR LBD domain. Residues 687–933 (LINLLVSIEP…MVKPLLFHKK (247 aa)) are AF2; mediates transcriptional activation. A progesterone-binding site is contributed by arginine 766.

Belongs to the nuclear hormone receptor family. In terms of assembly, interacts with SMARD1 and UNC45A. Interacts with CUEDC2; the interaction promotes ubiquitination, decreases sumoylation, and represses transcriptional activity. Interacts with PIAS3; the interaction promotes sumoylation of PR in a hormone-dependent manner, inhibits DNA-binding, and alters nuclear export. Interacts with SP1; the interaction requires ligand-induced phosphorylation on Ser-345 by ERK1/2-MAPK. Interacts with PRMT2. Interacts with NCOA2 and NCOA1. Interacts with KLF9. Interacts with GTF2B. In terms of processing, phosphorylated on multiple serine sites. Several of these sites are hormone-dependent. Phosphorylation on Ser-294 is highly hormone-dependent and modulates ubiquitination and sumoylation on Lys-388. Phosphorylation on Ser-345 also requires induction by hormone. Basal phosphorylation on Ser-162, Ser-190 and Ser-400 is increased in response to progesterone and can be phosphorylated in vitro by the CDK2-A1 complex. Increased levels of phosphorylation on Ser-400 also in the presence of EGF, heregulin, IGF, PMA and FBS. Phosphorylation at this site by CDK2 is ligand-independent, and increases nuclear translocation and transcriptional activity. Phosphorylation at Ser-162 and Ser-294, but not at Ser-190, is impaired during the G(2)/M phase of the cell cycle. Phosphorylation on Ser-345 by ERK1/2 MAPK is required for interaction with SP1. Sumoylation is hormone-dependent and represses transcriptional activity. Sumoylation on all three sites is enhanced by PIAS3. Desumoylated by SENP1. Sumoylation on Lys-388, the main site of sumoylation, is repressed by ubiquitination on the same site, and modulated by phosphorylation at Ser-294. Post-translationally, ubiquitination is hormone-dependent and represses sumoylation on the same site. Promoted by MAPK-mediated phosphorylation on Ser-294. Ubiquitinated by UBR5, leading to its degradation: UBR5 specifically recognizes and binds ligand-bound PGR when it is not associated with coactivators (NCOAs). In presence of NCOAs, the UBR5-degron is not accessible, preventing its ubiquitination and degradation. In terms of processing, palmitoylated by ZDHHC7 and ZDHHC21. Palmitoylation is required for plasma membrane targeting and for rapid intracellular signaling via ERK and AKT kinases and cAMP generation.

The protein resides in the nucleus. It localises to the cytoplasm. Functionally, the steroid hormones and their receptors are involved in the regulation of eukaryotic gene expression and affect cellular proliferation and differentiation in target tissues. Transcriptional activator of several progesteron-dependent promoters in a variety of cell types. Involved in activation of SRC-dependent MAPK signaling on hormone stimulation. The chain is Progesterone receptor (PGR) from Chlorocebus aethiops (Green monkey).